The primary structure comprises 267 residues: DNA repair protein RecO (267 aa).

This sequence belongs to the RecO family.

In terms of biological role, involved in DNA repair and RecF pathway recombination. The chain is DNA repair protein RecO from Prochlorococcus marinus (strain MIT 9303).